Consider the following 242-residue polypeptide: Octanoyltransferase (242 aa).

The 176-residue stretch at 31-206 folds into the BPL/LPL catalytic domain; the sequence is SQTTDEIWFL…LFLKNFGYNQ (176 aa). Substrate contacts are provided by residues 70-77, 137-139, and 150-152; these read RGGQVTYH, SIG, and GLA. C168 (acyl-thioester intermediate) is an active-site residue.

Belongs to the LipB family.

The protein localises to the cytoplasm. The catalysed reaction is octanoyl-[ACP] + L-lysyl-[protein] = N(6)-octanoyl-L-lysyl-[protein] + holo-[ACP] + H(+). It functions in the pathway protein modification; protein lipoylation via endogenous pathway; protein N(6)-(lipoyl)lysine from octanoyl-[acyl-carrier-protein]: step 1/2. Catalyzes the transfer of endogenously produced octanoic acid from octanoyl-acyl-carrier-protein onto the lipoyl domains of lipoate-dependent enzymes. Lipoyl-ACP can also act as a substrate although octanoyl-ACP is likely to be the physiological substrate. The polypeptide is Octanoyltransferase (Coxiella burnetii (strain Dugway 5J108-111)).